We begin with the raw amino-acid sequence, 117 residues long: Chondroitin proteoglycan 7 (117 aa).

The signal sequence occupies residues 1 to 19; that stretch reads MQTITLLALLACIAVPIFA. A disordered region spans residues 31 to 97; that stretch reads VEASGEGSGE…SGENLSNGIV (67 aa). Low complexity-rich tracts occupy residues 32 to 41 and 48 to 57; these read EASGEGSGES and ESSGEGSGES. Residues Ser-66, Ser-70, Ser-74, Ser-84, and Ser-88 are each glycosylated (O-linked (Xyl...) (chondroitin sulfate) serine). Residues 75-95 show a composition bias toward low complexity; sequence GASDAVLESSGEGSGENLSNG. The N-linked (GlcNAc...) asparagine glycan is linked to Asn-91.

This Caenorhabditis briggsae protein is Chondroitin proteoglycan 7 (cpg-7).